The primary structure comprises 495 residues: Meiosis-specific nuclear structural protein 1 (495 aa).

The segment at 1–314 (MASKRRNMSC…KLEEMLRQRE (314 aa)) is interaction with BBOF1. The stretch at 59–410 (LLQNEQFELD…QLEHRRAVEK (352 aa)) forms a coiled coil. Tyr188 is subject to Phosphotyrosine.

It belongs to the MNS1 family. In terms of assembly, able to form oligomers. Microtubule inner protein component of sperm flagellar doublet microtubules. Interacts with ODAD1. Interacts with BBOF1.

The protein localises to the nucleus. The protein resides in the cytoplasm. Its subcellular location is the cytoskeleton. It is found in the cilium axoneme. It localises to the flagellum axoneme. Functionally, microtubule inner protein (MIP) part of the dynein-decorated doublet microtubules (DMTs) in cilia axoneme, which is required for motile cilia beating. May play a role in the control of meiotic division and germ cell differentiation through regulation of pairing and recombination during meiosis. Required for sperm flagella assembly. May play a role in the assembly and function of the outer dynein arm-docking complex (ODA-DC). ODA-DC mediates outer dynein arms (ODA) binding onto the axonemal doublet microtubules. The polypeptide is Meiosis-specific nuclear structural protein 1 (MNS1) (Macaca fascicularis (Crab-eating macaque)).